Here is a 47-residue protein sequence, read N- to C-terminus: Photosystem II reaction center protein K (47 aa).

Residues 1 to 10 (MAVYTLDLLA) constitute a propeptide that is removed on maturation. Residues 19–39 (FGPLIDILPIIPLFFLLLAFV) form a helical membrane-spanning segment.

It belongs to the PsbK family. In terms of assembly, PSII is composed of 1 copy each of membrane proteins PsbA, PsbB, PsbC, PsbD, PsbE, PsbF, PsbH, PsbI, PsbJ, PsbK, PsbL, PsbM, PsbT, PsbX, PsbY, PsbZ, Psb30/Ycf12, peripheral proteins PsbO, CyanoQ (PsbQ), PsbU, PsbV and a large number of cofactors. It forms dimeric complexes.

It is found in the cellular thylakoid membrane. Its function is as follows. One of the components of the core complex of photosystem II (PSII). PSII is a light-driven water:plastoquinone oxidoreductase that uses light energy to abstract electrons from H(2)O, generating O(2) and a proton gradient subsequently used for ATP formation. It consists of a core antenna complex that captures photons, and an electron transfer chain that converts photonic excitation into a charge separation. This chain is Photosystem II reaction center protein K, found in Synechococcus sp. (strain CC9311).